The primary structure comprises 282 residues: Chromatin modification-related protein YNG2 (282 aa).

Positions 35 to 86 (LIEEKKKYEQKESQIHKFIRQQGSIPKHPQEDGLDKEIKESLLKCQSLQREK) form a coiled coil. The segment at 123–217 (DGDMDSAAEA…KGQNGSPENE (95 aa)) is disordered. A compositionally biased stretch (low complexity) spans 129 to 143 (AAEASRESSVVSNSS). Position 183 is a phosphoserine (S183). T185 is modified (phosphothreonine). Phosphoserine is present on S188. Positions 191–203 (IEKKIARTKEFKN) are enriched in basic and acidic residues. Residues 204–214 (SRNGKGQNGSP) are compositionally biased toward polar residues. Residues 222 to 271 (TLYCFCQRVSFGEMVACDGPNCKYEWFHYDCVNLKEPPKGTWYCPECKIE) form a PHD-type zinc finger. Residues C225, C227, C238, C243, H249, C252, C265, and C268 each coordinate Zn(2+).

The protein belongs to the ING family. In terms of assembly, interacts with H3K4me3 and to a lesser extent with H3K4me2. Component of the NuA4 histone acetyltransferase complex composed of at least ACT1, ARP4, YAF9, VID21, SWC4, EAF3, EAF5, EAF6, EAF7, EPL1, ESA1, TRA1 and YNG2.

It is found in the nucleus. Component of the NuA4 histone acetyltransferase complex which is involved in transcriptional activation of selected genes principally by acetylation of nucleosomal histone H4 and H2A. The NuA4 complex is also involved in DNA repair. Involved in cell cycle progression and meiosis. This chain is Chromatin modification-related protein YNG2 (YNG2), found in Saccharomyces cerevisiae (strain ATCC 204508 / S288c) (Baker's yeast).